Reading from the N-terminus, the 253-residue chain is Nurim homolog (253 aa).

Over 1 to 2 the chain is Nuclear; it reads MA. The chain crosses the membrane as a helical span at residues 3–30; it reads TFAKVMLLLSSVATFGYTFFVVGKLMLF. Residues 31 to 56 lie on the Perinuclear space side of the membrane; the sequence is LSTPRSISKAHTWIFNLLDNKSRLET. A helical transmembrane segment spans residues 57-78; sequence AYGPIVFDTLYLIGFIFQHSFL. Topologically, residues 79 to 96 are nuclear; it reads KSALVKNLWRKLGLAAAE. Residues 97–113 traverse the membrane as a helical segment; the sequence is RTIYSLTSSICLHYLLK. Over 114-132 the chain is Perinuclear space; that stretch reads NWLPAQSIVLWQVDVDESA. The chain crosses the membrane as a helical span at residues 133–161; sequence PLWWTFVVTHGLGWAVIFGGSLIMDLPEL. Over 162–188 the chain is Nuclear; sequence LGVKQVYYDLKEYGEPVAYKSSELRNL. Residues 189–207 form a helical membrane-spanning segment; the sequence is YSHVRHPSFVGLSVILFAT. The Perinuclear space segment spans residues 208–213; it reads NVMSLD. The helical transmembrane segment at 214 to 231 threads the bilayer; sequence RLLLASLLTVYMYVAWST. The Nuclear segment spans residues 232–253; that stretch reads DDKDVAYQKQQLRNKKHELKAQ.

This sequence belongs to the nurim family.

Its subcellular location is the nucleus inner membrane. In Drosophila pseudoobscura pseudoobscura (Fruit fly), this protein is Nurim homolog (nrm).